The following is a 764-amino-acid chain: Sesterfisherol synthase (764 aa).

Residues 2-331 (EVWEHSRPIA…SPRHHAWRNN (330 aa)) form a terpene cyclase region. Asp95 contacts Mg(2+). Substrate contacts are provided by residues Asp95, 187-190 (RRDD), Asn231, 235-239 (SFDRE), and 324-325 (RH). The DDXXD 1 motif lies at 95–99 (DDGYE). The short motif at 231–239 (NDYWSFDRE) is the NSE/DTE element. The segment at 332 to 759 (SRNGLKPANH…PMLRLLLEKL (428 aa)) is prenyltransferase. Positions 347-372 (LITPSNNLNSSKGSEEQMQDSDNGTR) are disordered. Over residues 348–358 (ITPSNNLNSSK) the composition is skewed to polar residues. Positions 476, 479, and 508 each coordinate isopentenyl diphosphate. Mg(2+) is bound by residues Asp515 and Asp519. Residues 515–519 (DDIED) carry the DDXXD 2 motif. Arg524 serves as a coordination point for dimethylallyl diphosphate. Position 525 (Arg525) interacts with isopentenyl diphosphate. Dimethylallyl diphosphate is bound by residues Lys602, Thr603, Gln638, Asn645, Lys655, and Lys665.

It in the N-terminal section; belongs to the terpene synthase family. In the C-terminal section; belongs to the FPP/GGPP synthase family. In terms of assembly, hexamer. Requires Mg(2+) as cofactor.

It catalyses the reaction isopentenyl diphosphate + (2E,6E)-farnesyl diphosphate = (2E,6E,10E)-geranylgeranyl diphosphate + diphosphate. It carries out the reaction isopentenyl diphosphate + (2E,6E,10E)-geranylgeranyl diphosphate = (2E,6E,10E,14E)-geranylfarnesyl diphosphate + diphosphate. The catalysed reaction is (2E,6E,10E,14E)-geranylfarnesyl diphosphate + H2O = sesterfisherol + diphosphate. It participates in secondary metabolite biosynthesis; terpenoid biosynthesis. Bifunctional terpene synthase; part of the gene cluster that mediates the biosynthesis of sesterfisheric acid. The bifunctional terpene synthase NfSS converts dimethylallyl diphosphate (DMAPP) and isopentenyl diphosphate (IPP) into sesterfisherol. The C-terminal prenyltransferase (PT) domain of NfSS catalyzes formation of geranylfarnesyl pyrophosphate (GFPP), whereas the N-terminal terpene cyclase (TC) domain catalyzes the cyclization of GFPP to sesterfisherol. The cytochrome P450 monooxygenase NfP450 then catalyzes oxidative modifications of sesterfisherol into sesterfisheric acid. This is Sesterfisherol synthase from Neosartorya fischeri (strain ATCC 1020 / DSM 3700 / CBS 544.65 / FGSC A1164 / JCM 1740 / NRRL 181 / WB 181) (Aspergillus fischerianus).